The following is a 331-amino-acid chain: Ketol-acid reductoisomerase (NADP(+)) (331 aa).

In terms of domain architecture, KARI N-terminal Rossmann spans 2-182 (AKMYYDQDAD…GGTKAGAIET (181 aa)). NADP(+) is bound by residues 25 to 28 (FGSQ), Ser-51, Ser-53, and 83 to 86 (DEKQ). Residue His-108 is part of the active site. Gly-134 contacts NADP(+). The KARI C-terminal knotted domain maps to 183–328 (TFKEETETDL…KSLREMMPWL (146 aa)). 4 residues coordinate Mg(2+): Asp-191, Glu-195, Glu-227, and Glu-231. Residue Ser-252 participates in substrate binding.

It belongs to the ketol-acid reductoisomerase family. It depends on Mg(2+) as a cofactor.

The catalysed reaction is (2R)-2,3-dihydroxy-3-methylbutanoate + NADP(+) = (2S)-2-acetolactate + NADPH + H(+). It catalyses the reaction (2R,3R)-2,3-dihydroxy-3-methylpentanoate + NADP(+) = (S)-2-ethyl-2-hydroxy-3-oxobutanoate + NADPH + H(+). It participates in amino-acid biosynthesis; L-isoleucine biosynthesis; L-isoleucine from 2-oxobutanoate: step 2/4. Its pathway is amino-acid biosynthesis; L-valine biosynthesis; L-valine from pyruvate: step 2/4. Functionally, involved in the biosynthesis of branched-chain amino acids (BCAA). Catalyzes an alkyl-migration followed by a ketol-acid reduction of (S)-2-acetolactate (S2AL) to yield (R)-2,3-dihydroxy-isovalerate. In the isomerase reaction, S2AL is rearranged via a Mg-dependent methyl migration to produce 3-hydroxy-3-methyl-2-ketobutyrate (HMKB). In the reductase reaction, this 2-ketoacid undergoes a metal-dependent reduction by NADPH to yield (R)-2,3-dihydroxy-isovalerate. This chain is Ketol-acid reductoisomerase (NADP(+)), found in Caldanaerobacter subterraneus subsp. tengcongensis (strain DSM 15242 / JCM 11007 / NBRC 100824 / MB4) (Thermoanaerobacter tengcongensis).